The primary structure comprises 407 residues: Phosphonoacetate hydrolase (407 aa).

Positions 25, 64, 202, 206, 241, 242, and 368 each coordinate Zn(2+). Substrate is bound by residues Thr-64 and Asp-202. Positions 242 and 368 each coordinate substrate.

This sequence belongs to the alkaline phosphatase family. PhnA subfamily. Homodimer. Zn(2+) serves as cofactor.

The catalysed reaction is phosphonoacetate + H2O = acetate + phosphate + H(+). In terms of biological role, specifically hydrolyzes phosphonoacetate. Does not have activity on other organophosphonates or acetates. The sequence is that of Phosphonoacetate hydrolase from Pseudomonas putida (Arthrobacter siderocapsulatus).